A 401-amino-acid polypeptide reads, in one-letter code: Homoserine O-acetyltransferase (401 aa).

The 322-residue stretch at 37–358 (NAVLVCHALT…HGHDAFLVEP (322 aa)) folds into the AB hydrolase-1 domain. Catalysis depends on S146, which acts as the Nucleophile. Position 215 (R215) interacts with substrate. Active-site residues include D318 and H351. Residue D352 coordinates substrate.

It belongs to the AB hydrolase superfamily. MetX family. As to quaternary structure, homodimer.

It localises to the cytoplasm. The enzyme catalyses L-homoserine + acetyl-CoA = O-acetyl-L-homoserine + CoA. Its pathway is amino-acid biosynthesis; L-methionine biosynthesis via de novo pathway; O-acetyl-L-homoserine from L-homoserine: step 1/1. In terms of biological role, transfers an acetyl group from acetyl-CoA to L-homoserine, forming acetyl-L-homoserine. This chain is Homoserine O-acetyltransferase, found in Natronomonas pharaonis (strain ATCC 35678 / DSM 2160 / CIP 103997 / JCM 8858 / NBRC 14720 / NCIMB 2260 / Gabara) (Halobacterium pharaonis).